The primary structure comprises 175 residues: ATP synthase subunit b (175 aa).

A helical membrane pass occupies residues 14-34 (LSPNPGLIFWTTVSFVIVLLI).

This sequence belongs to the ATPase B chain family. As to quaternary structure, F-type ATPases have 2 components, F(1) - the catalytic core - and F(0) - the membrane proton channel. F(1) has five subunits: alpha(3), beta(3), gamma(1), delta(1), epsilon(1). F(0) has four main subunits: a(1), b(2) and c(10-14). The alpha and beta chains form an alternating ring which encloses part of the gamma chain. F(1) is attached to F(0) by a central stalk formed by the gamma and epsilon chains, while a peripheral stalk is formed by the delta and b chains.

Its subcellular location is the cell inner membrane. F(1)F(0) ATP synthase produces ATP from ADP in the presence of a proton or sodium gradient. F-type ATPases consist of two structural domains, F(1) containing the extramembraneous catalytic core and F(0) containing the membrane proton channel, linked together by a central stalk and a peripheral stalk. During catalysis, ATP synthesis in the catalytic domain of F(1) is coupled via a rotary mechanism of the central stalk subunits to proton translocation. Functionally, component of the F(0) channel, it forms part of the peripheral stalk, linking F(1) to F(0). The protein is ATP synthase subunit b of Chlorobium phaeobacteroides (strain DSM 266 / SMG 266 / 2430).